Consider the following 231-residue polypeptide: Large ribosomal subunit protein uL1 (231 aa).

The protein belongs to the universal ribosomal protein uL1 family. As to quaternary structure, part of the 50S ribosomal subunit.

In terms of biological role, binds directly to 23S rRNA. The L1 stalk is quite mobile in the ribosome, and is involved in E site tRNA release. Functionally, protein L1 is also a translational repressor protein, it controls the translation of the L11 operon by binding to its mRNA. This Azotobacter vinelandii (strain DJ / ATCC BAA-1303) protein is Large ribosomal subunit protein uL1.